Here is a 146-residue protein sequence, read N- to C-terminus: Histone H2A.1 (146 aa).

The interval 118–146 (SPAAAEKEAKSPKKKTSTKSPKKKVAAKE) is disordered. 2 consecutive short sequence motifs (SPKK motif) follow at residues 128 to 131 (SPKK) and 137 to 140 (SPKK). Basic residues predominate over residues 129 to 146 (PKKKTSTKSPKKKVAAKE).

Belongs to the histone H2A family. The nucleosome is a histone octamer containing two molecules each of H2A, H2B, H3 and H4 assembled in one H3-H4 heterotetramer and two H2A-H2B heterodimers. The octamer wraps approximately 147 bp of DNA. Phosphorylated within its C-terminal part, probably at the SPKK motifs. Expressed preferentially in meristematic tissues of young seedlings, in stigma and ovary but not in pollen.

It localises to the nucleus. It is found in the chromosome. Its function is as follows. Core component of nucleosome. Nucleosomes wrap and compact DNA into chromatin, limiting DNA accessibility to the cellular machineries which require DNA as a template. Histones thereby play a central role in transcription regulation, DNA repair, DNA replication and chromosomal stability. DNA accessibility is regulated via a complex set of post-translational modifications of histones, also called histone code, and nucleosome remodeling. The sequence is that of Histone H2A.1 (H2A-9) from Triticum aestivum (Wheat).